Consider the following 188-residue polypeptide: Acireductone dioxygenase (188 aa).

Residues H97, H99, E103, and H141 each coordinate Fe(2+). Ni(2+) is bound by residues H97, H99, E103, and H141.

This sequence belongs to the acireductone dioxygenase (ARD) family. As to quaternary structure, monomer. Fe(2+) serves as cofactor. The cofactor is Ni(2+).

The enzyme catalyses 1,2-dihydroxy-5-(methylsulfanyl)pent-1-en-3-one + O2 = 3-(methylsulfanyl)propanoate + CO + formate + 2 H(+). It carries out the reaction 1,2-dihydroxy-5-(methylsulfanyl)pent-1-en-3-one + O2 = 4-methylsulfanyl-2-oxobutanoate + formate + 2 H(+). It participates in amino-acid biosynthesis; L-methionine biosynthesis via salvage pathway; L-methionine from S-methyl-5-thio-alpha-D-ribose 1-phosphate: step 5/6. In terms of biological role, catalyzes 2 different reactions between oxygen and the acireductone 1,2-dihydroxy-3-keto-5-methylthiopentene (DHK-MTPene) depending upon the metal bound in the active site. Fe-containing acireductone dioxygenase (Fe-ARD) produces formate and 2-keto-4-methylthiobutyrate (KMTB), the alpha-ketoacid precursor of methionine in the methionine recycle pathway. Ni-containing acireductone dioxygenase (Ni-ARD) produces methylthiopropionate, carbon monoxide and formate, and does not lie on the methionine recycle pathway. This Gluconobacter oxydans (strain 621H) (Gluconobacter suboxydans) protein is Acireductone dioxygenase.